We begin with the raw amino-acid sequence, 233 residues long: ATP-dependent Clp protease proteolytic subunit 1 (233 aa).

The active-site Nucleophile is the serine 116. Histidine 141 is an active-site residue.

This sequence belongs to the peptidase S14 family. Fourteen ClpP subunits assemble into 2 heptameric rings which stack back to back to give a disk-like structure with a central cavity, resembling the structure of eukaryotic proteasomes.

Its subcellular location is the cytoplasm. It carries out the reaction Hydrolysis of proteins to small peptides in the presence of ATP and magnesium. alpha-casein is the usual test substrate. In the absence of ATP, only oligopeptides shorter than five residues are hydrolyzed (such as succinyl-Leu-Tyr-|-NHMec, and Leu-Tyr-Leu-|-Tyr-Trp, in which cleavage of the -Tyr-|-Leu- and -Tyr-|-Trp bonds also occurs).. Functionally, cleaves peptides in various proteins in a process that requires ATP hydrolysis. Has a chymotrypsin-like activity. Plays a major role in the degradation of misfolded proteins. In Salinibacter ruber (strain DSM 13855 / M31), this protein is ATP-dependent Clp protease proteolytic subunit 1.